A 307-amino-acid polypeptide reads, in one-letter code: Type 2A encapsulin shell protein (307 aa).

This sequence belongs to the encapsulin family. Family 2A subfamily. The encapsulin nanocompartment is formed by 60 subunits; monomers form pentamers which assemble to form shells. There are 12 charged pores where the pentamers meet as well as 3-fold axis channels and dimer channels. Isolated from bacteria in a complex with cysteine desulfurase (AC Q9KII6).

It is found in the encapsulin nanocompartment. The protein localises to the cell membrane. Shell component of a type 2A encapsulin nanocompartment. Forms encapsulin nanocompartments about 24 nm in diameter from 60 monomers, probably involved in sulfur metabolism. Probably encapsulates cysteine desulfurase. This is Type 2A encapsulin shell protein from Mycolicibacterium paratuberculosis (strain ATCC BAA-968 / K-10) (Mycobacterium paratuberculosis).